The chain runs to 392 residues: uncharacterized protein (392 aa).

Belongs to the ROK (NagC/XylR) family.

This is an uncharacterized protein from Sinorhizobium fredii (strain NBRC 101917 / NGR234).